The sequence spans 626 residues: MGRAVGIDLGTTNSCIATLEGGQPTVIVNAEGARTTPSVVAFSKSGEILVGEVAKRQAVTNVDRTISSVKRHMGTDWTVEIDGKKWTPQEISAQVLMKLKRDAEAYLGEPVTDAVITCPAYFNDAQRQATKDAGTIAGLNVLRIINEPTAAALAYGLEKGKEDERILVFDLGGGTFDVSLLEIGKDDDGFSTIQVQATNGDNHLGGDDWDQKIIDWLVGEVKNKYGVDLSKDKIALQRLKEAAEQAKKELSSSTSTSISMQYLAMTPDGTPVHLDETLTRAHFEEMTSDLLGRCRTPFNNVLRDAGIGVSDIDHVVLVGGSTRMPAVKELVKELTGGKEANQSVNPDEVVAVGAAVQSGVIKGDRKDVLLIDVTPLSLGIETKGGIMTKLIERNTAIPTKRSEVFSTAEDNQPSVLIQVYQGEREFARDNKPLGTFELTGIAPAPRGVPQIEVTFDIDANGIVHVSAKDKGTGKEQSMTITGGSGLPKDEIDRMVKEAEAHEAEDKKRKEDAETRNQAESFAYQTEKLVNDNKDKLSDDVAKEVTDKVNELKEALKGEDIEKIKSAQTELMTSAQKIGQALYAQQGAADAAGAAGAAGAGAAGSASNGSDDDVVDAEVVDDDKDNK.

A Phosphothreonine; by autocatalysis modification is found at Thr-175. Disordered regions lie at residues 469-488 (DKGT…GLPK), 498-517 (AEAH…TRNQ), and 583-626 (AQQG…KDNK). Residues 498-516 (AEAHEAEDKKRKEDAETRN) are compositionally biased toward basic and acidic residues. Residues 609-626 (SDDDVVDAEVVDDDKDNK) are compositionally biased toward acidic residues.

Belongs to the heat shock protein 70 family.

Functionally, acts as a chaperone. The polypeptide is Chaperone protein DnaK (Bifidobacterium adolescentis (strain ATCC 15703 / DSM 20083 / NCTC 11814 / E194a)).